The sequence spans 547 residues: Apolipoprotein N-acyltransferase (547 aa).

6 helical membrane-spanning segments follow: residues 31–51, 65–85, 89–109, 144–164, 181–201, and 215–235; these read PLPA…AAHA, GWLF…VSMH, GLAA…LALF, AACW…FPWL, LLGV…LAGL, and LAAG…QFSW. A CN hydrolase domain is found at 248 to 511; it reads VQGNVEQSQK…AGVLPVAVQG (264 aa). Glutamate 292 serves as the catalytic Proton acceptor. Residue lysine 366 is part of the active site. Catalysis depends on cysteine 416, which acts as the Nucleophile.

It belongs to the CN hydrolase family. Apolipoprotein N-acyltransferase subfamily.

It is found in the cell inner membrane. The enzyme catalyses N-terminal S-1,2-diacyl-sn-glyceryl-L-cysteinyl-[lipoprotein] + a glycerophospholipid = N-acyl-S-1,2-diacyl-sn-glyceryl-L-cysteinyl-[lipoprotein] + a 2-acyl-sn-glycero-3-phospholipid + H(+). It participates in protein modification; lipoprotein biosynthesis (N-acyl transfer). Functionally, catalyzes the phospholipid dependent N-acylation of the N-terminal cysteine of apolipoprotein, the last step in lipoprotein maturation. The chain is Apolipoprotein N-acyltransferase from Bordetella bronchiseptica (strain ATCC BAA-588 / NCTC 13252 / RB50) (Alcaligenes bronchisepticus).